The chain runs to 3814 residues: Hybrid PKS-NRPS synthetase pyvA (3814 aa).

One can recognise a Ketosynthase family 3 (KS3) domain in the interval 1–340 (MDPQQRLLLE…GSNAHVILES (340 aa)). Catalysis depends on for beta-ketoacyl synthase activity residues Cys87, His222, and His261. The interval 441–758 (VFTGQGAQWH…PYFASLSRGV (318 aa)) is malonyl-CoA:ACP transacylase (MAT) domain. Ser533 (for malonyltransferase activity) is an active-site residue. The N-terminal hotdog fold stretch occupies residues 835-970 (HPILGAKMPG…GLISISTATT (136 aa)). The dehydratase (DH) domain stretch occupies residues 835–1149 (HPILGAKMPG…LRLTSLSNGR (315 aa)). In terms of domain architecture, PKS/mFAS DH spans 835-1151 (HPILGAKMPG…LTSLSNGRAA (317 aa)). His867 serves as the catalytic Proton acceptor; for dehydratase activity. A disordered region spans residues 970–993 (TADGAPSRKPYRQHPQPQPGRMST). The C-terminal hotdog fold stretch occupies residues 991-1151 (MSTASFPAQS…LTSLSNGRAA (161 aa)). Asp1057 functions as the Proton donor; for dehydratase activity in the catalytic mechanism. The segment at 1520 to 1836 (GLLETLVWED…MGRHTGKVVL (317 aa)) is enoyl reductase (ER) domain. The segment at 1864–2036 (TYLLVGGLGG…PASSMNCGRI (173 aa)) is ketoreductase (KR) domain. The 80-residue stretch at 2141 to 2220 (IDLSDRVALL…ALVEKAIGLF (80 aa)) folds into the Carrier 1 domain. Ser2180 carries the O-(pantetheine 4'-phosphoryl)serine modification. The span at 2228–2238 (QQQQQSVQSSS) shows a compositional bias: low complexity. The segment at 2228–2270 (QQQQQSVQSSSAPSNDDQSPTFNKNLDSQDPSTSLQIPKADCS) is disordered. Over residues 2239-2263 (APSNDDQSPTFNKNLDSQDPSTSLQ) the composition is skewed to polar residues. Positions 2273–2718 (LPMSTFQNRL…PEVRLAGTLE (446 aa)) are condensation (C) domain 7. The adenylation (A) domain 8 stretch occupies residues 2738-3149 (PLNLPRRIVE…DGQLEFLGRI (412 aa)). Positions 3257–3304 (SGKTDRRALGASQAPGTPPQHGAGPAAASTLDPAQAQAQDRADEEVGD) are disordered. The region spanning 3304 to 3379 (DRTMATVTRV…QLVELVHSKV (76 aa)) is the Carrier 2 domain. The residue at position 3339 (Ser3339) is an O-(pantetheine 4'-phosphoryl)serine. Residues 3428-3680 (MTGAESFTGI…VDLVPVNYLT (253 aa)) are thioesterase (TE) domain.

This sequence in the C-terminal section; belongs to the NRP synthetase family.

The protein operates within secondary metabolite biosynthesis. Hybrid PKS-NRPS synthetase; part of the gene cluster that mediates the biosynthesis of pyranoviolin A, a pyranonigrin analog with a C-3 methoxy group. Initially, the PKS portion of pyvA synthesizes C-10 carbon chain from 5 molecules of malonyl-CoA, which is then condensed with the thiolation (T) domain-bound glycine activated by the adenylation (A) domain. The subsequent chain release by Dieckmann condensation (DKC) could be catalyzed by the TE domain present at the C-terminus of pyvA and/or the alpha/beta hydrolase pyvD, installing the tetramic acid moiety. The FAD-dependent monooxygenase pyvC next epoxidizes one of the olefins of the polyketide part, and the epoxide ring-opening induces the dihydro-gamma-pyrone ring formation. The cytochrome P450 monooxygeanse pyvB would be responsible for the 2 consecutive reactions, in which the dihydro-gamma-pyrone is oxidized to gamma-pyrone and C-7 is hydroxylated to yield pyranonigrin F. Finally, the O-methyltransferase pyvH methylates the C-3 hydroxy group to complete the biosynthesis. The polypeptide is Hybrid PKS-NRPS synthetase pyvA (Aspergillus violaceofuscus (strain CBS 115571)).